A 273-amino-acid chain; its full sequence is Formamidopyrimidine-DNA glycosylase (273 aa).

Catalysis depends on Pro-2, which acts as the Schiff-base intermediate with DNA. Residue Glu-3 is the Proton donor of the active site. Lys-58 acts as the Proton donor; for beta-elimination activity in catalysis. DNA is bound by residues His-92, Arg-111, and Lys-153. The FPG-type zinc-finger motif lies at 238-272; sequence KVYGREGQSCLSCSSTIIKIKHSGRSTFYCKTCQY. Arg-262 functions as the Proton donor; for delta-elimination activity in the catalytic mechanism.

The protein belongs to the FPG family. In terms of assembly, monomer. It depends on Zn(2+) as a cofactor.

The catalysed reaction is Hydrolysis of DNA containing ring-opened 7-methylguanine residues, releasing 2,6-diamino-4-hydroxy-5-(N-methyl)formamidopyrimidine.. The enzyme catalyses 2'-deoxyribonucleotide-(2'-deoxyribose 5'-phosphate)-2'-deoxyribonucleotide-DNA = a 3'-end 2'-deoxyribonucleotide-(2,3-dehydro-2,3-deoxyribose 5'-phosphate)-DNA + a 5'-end 5'-phospho-2'-deoxyribonucleoside-DNA + H(+). Functionally, involved in base excision repair of DNA damaged by oxidation or by mutagenic agents. Acts as a DNA glycosylase that recognizes and removes damaged bases. Has a preference for oxidized purines, such as 7,8-dihydro-8-oxoguanine (8-oxoG). Has AP (apurinic/apyrimidinic) lyase activity and introduces nicks in the DNA strand. Cleaves the DNA backbone by beta-delta elimination to generate a single-strand break at the site of the removed base with both 3'- and 5'-phosphates. The chain is Formamidopyrimidine-DNA glycosylase from Rickettsia conorii (strain ATCC VR-613 / Malish 7).